The following is a 359-amino-acid chain: Fructose-bisphosphate aldolase 1 (359 aa).

Residue Ser50 participates in D-glyceraldehyde 3-phosphate binding. The active-site Proton donor is Asp83. Zn(2+) is bound by residues His84, Asp105, Glu142, and His198. Gly199 lines the dihydroxyacetone phosphate pocket. A Zn(2+)-binding site is contributed by His232. Dihydroxyacetone phosphate-binding positions include 233–235 and 275–278; these read GSS and NIDT.

The protein belongs to the class II fructose-bisphosphate aldolase family. Homodimer. Zn(2+) is required as a cofactor.

The enzyme catalyses beta-D-fructose 1,6-bisphosphate = D-glyceraldehyde 3-phosphate + dihydroxyacetone phosphate. It functions in the pathway carbohydrate biosynthesis; Calvin cycle. The protein operates within carbohydrate degradation; glycolysis; D-glyceraldehyde 3-phosphate and glycerone phosphate from D-glucose: step 4/4. Its function is as follows. Catalyzes the aldol condensation of dihydroxyacetone phosphate (DHAP or glycerone-phosphate) with glyceraldehyde 3-phosphate (G3P) to form fructose 1,6-bisphosphate (FBP) in gluconeogenesis and the reverse reaction in glycolysis. This is Fructose-bisphosphate aldolase 1 (cfxA) from Cereibacter sphaeroides (Rhodobacter sphaeroides).